The primary structure comprises 455 residues: UDP-N-acetylmuramoyl-tripeptide--D-alanyl-D-alanine ligase (455 aa).

ATP is bound at residue 107-113; it reads GSCGKTS.

This sequence belongs to the MurCDEF family. MurF subfamily.

The protein resides in the cytoplasm. The enzyme catalyses D-alanyl-D-alanine + UDP-N-acetyl-alpha-D-muramoyl-L-alanyl-gamma-D-glutamyl-meso-2,6-diaminopimelate + ATP = UDP-N-acetyl-alpha-D-muramoyl-L-alanyl-gamma-D-glutamyl-meso-2,6-diaminopimeloyl-D-alanyl-D-alanine + ADP + phosphate + H(+). The protein operates within cell wall biogenesis; peptidoglycan biosynthesis. In terms of biological role, involved in cell wall formation. Catalyzes the final step in the synthesis of UDP-N-acetylmuramoyl-pentapeptide, the precursor of murein. The polypeptide is UDP-N-acetylmuramoyl-tripeptide--D-alanyl-D-alanine ligase (Buchnera aphidicola subsp. Acyrthosiphon pisum (strain APS) (Acyrthosiphon pisum symbiotic bacterium)).